The primary structure comprises 351 residues: Protein-glutamate methylesterase/protein-glutamine glutaminase 2 (351 aa).

The Response regulatory domain maps to 4-121 (KVLVVDDSTL…PQGFNEYQDL (118 aa)). 4-aspartylphosphate is present on Asp55. Residues 156–348 (RTVNTQLVAI…DKLLQYLASV (193 aa)) form the CheB-type methylesterase domain. Residues Ser168, His194, and Asp290 contribute to the active site.

It belongs to the CheB family. In terms of processing, phosphorylated by CheA. Phosphorylation of the N-terminal regulatory domain activates the methylesterase activity.

The protein resides in the cytoplasm. It carries out the reaction [protein]-L-glutamate 5-O-methyl ester + H2O = L-glutamyl-[protein] + methanol + H(+). The enzyme catalyses L-glutaminyl-[protein] + H2O = L-glutamyl-[protein] + NH4(+). Functionally, involved in chemotaxis. Part of a chemotaxis signal transduction system that modulates chemotaxis in response to various stimuli. Catalyzes the demethylation of specific methylglutamate residues introduced into the chemoreceptors (methyl-accepting chemotaxis proteins or MCP) by CheR. Also mediates the irreversible deamidation of specific glutamine residues to glutamic acid. The protein is Protein-glutamate methylesterase/protein-glutamine glutaminase 2 of Shewanella oneidensis (strain ATCC 700550 / JCM 31522 / CIP 106686 / LMG 19005 / NCIMB 14063 / MR-1).